The sequence spans 332 residues: L-lactate dehydrogenase A chain (332 aa).

An N-acetylalanine modification is found at A2. Residue K5 is modified to N6-acetyllysine; alternate. K5 is modified (N6-succinyllysine; alternate). K14 bears the N6-acetyllysine mark. A Phosphothreonine modification is found at T18. 29-57 (GAVGMACAISILMKDLADELALVDVIEDK) is an NAD(+) binding site. K57 carries the N6-acetyllysine; alternate modification. Residue K57 forms a Glycyl lysine isopeptide (Lys-Gly) (interchain with G-Cter in SUMO2); alternate linkage. K81 carries the post-translational modification N6-acetyllysine. NAD(+) is bound at residue R99. R106 provides a ligand contact to substrate. An N6-acetyllysine; alternate modification is found at K118. K118 carries the N6-succinyllysine; alternate modification. At K126 the chain carries N6-acetyllysine. N138 serves as a coordination point for NAD(+). Positions 138 and 169 each coordinate substrate. Catalysis depends on H193, which acts as the Proton acceptor. N6-acetyllysine occurs at positions 224 and 232. Phosphotyrosine is present on Y239. Residue K243 is modified to N6-acetyllysine. T248 contributes to the substrate binding site. Residue T309 is modified to Phosphothreonine. K318 bears the N6-acetyllysine; alternate mark. Position 318 is an N6-succinyllysine; alternate (K318). T322 is subject to Phosphothreonine.

It belongs to the LDH/MDH superfamily. LDH family. In terms of assembly, homotetramer. Interacts with PTEN upstream reading frame protein MP31. ISGylated.

It localises to the cytoplasm. It carries out the reaction (S)-lactate + NAD(+) = pyruvate + NADH + H(+). The protein operates within fermentation; pyruvate fermentation to lactate; (S)-lactate from pyruvate: step 1/1. Functionally, interconverts simultaneously and stereospecifically pyruvate and lactate with concomitant interconversion of NADH and NAD(+). The chain is L-lactate dehydrogenase A chain (LDHA) from Macaca fascicularis (Crab-eating macaque).